The sequence spans 389 residues: Flap endonuclease 1 (389 aa).

Positions Met1–Arg105 are N-domain. Mg(2+) is bound at residue Asp34. Positions 47 and 71 each coordinate DNA. Mg(2+) is bound by residues Asp87, Glu170, Glu172, Asp191, and Asp193. The interval Asp134 to His265 is I-domain. Glu170 provides a ligand contact to DNA. The DNA site is built by Gly243 and Asp245. Asp245 contacts Mg(2+). Positions Pro351–Phe359 are interaction with PCNA. The interval Lys360–Lys389 is disordered. Over residues Met362–Lys376 the composition is skewed to basic and acidic residues. The span at Thr377–Lys389 shows a compositional bias: basic residues.

This sequence belongs to the XPG/RAD2 endonuclease family. FEN1 subfamily. As to quaternary structure, interacts with PCNA. Three molecules of FEN1 bind to one PCNA trimer with each molecule binding to one PCNA monomer. PCNA stimulates the nuclease activity without altering cleavage specificity. Requires Mg(2+) as cofactor. Post-translationally, phosphorylated. Phosphorylation upon DNA damage induces relocalization to the nuclear plasma.

Its subcellular location is the nucleus. It localises to the nucleolus. The protein resides in the nucleoplasm. The protein localises to the mitochondrion. Functionally, structure-specific nuclease with 5'-flap endonuclease and 5'-3' exonuclease activities involved in DNA replication and repair. During DNA replication, cleaves the 5'-overhanging flap structure that is generated by displacement synthesis when DNA polymerase encounters the 5'-end of a downstream Okazaki fragment. It enters the flap from the 5'-end and then tracks to cleave the flap base, leaving a nick for ligation. Also involved in the long patch base excision repair (LP-BER) pathway, by cleaving within the apurinic/apyrimidinic (AP) site-terminated flap. Acts as a genome stabilization factor that prevents flaps from equilibrating into structures that lead to duplications and deletions. Also possesses 5'-3' exonuclease activity on nicked or gapped double-stranded DNA, and exhibits RNase H activity. Also involved in replication and repair of rDNA and in repairing mitochondrial DNA. The polypeptide is Flap endonuclease 1 (Yarrowia lipolytica (strain CLIB 122 / E 150) (Yeast)).